Here is a 990-residue protein sequence, read N- to C-terminus: Chondroitin sulfate ABC exolyase (990 aa).

The active-site Proton acceptor is H453. The active-site Proton donor is the Y460.

Belongs to the polysaccharide lyase 8 family.

The enzyme catalyses Exolytic removal of Delta(4)-unsaturated disaccharide residues from the non-reducing ends of both polymeric chondroitin/dermatan sulfates and their oligosaccharide fragments.. With respect to regulation, inhibited by Zn(2+), whereas Ni(2+), Fe(2+), and Cu(2+) have little or no effect on activity. Its function is as follows. Broad-specificity glycosaminoglycan lyase, which acts in an exolytic fashion, and preferentially degrades the tetra- and hexasaccharide derivatives of chondroitin sulfate and dermatan sulfate produced by the chondroitin sulfate ABC endolyase, to yield the respective disaccharides. To a lesser extent, is also able to split off disaccharide residues directly from polymeric chondroitin 4- and 6-sulfate, dermatan sulfate, chondroitin, and hyaluronan. Is not active against keratan sulfate, heparan sulfate, and heparin. This chain is Chondroitin sulfate ABC exolyase (ChABCII), found in Proteus vulgaris.